The following is an 858-amino-acid chain: DNA mismatch repair protein MutS (858 aa).

609–616 contacts ATP; sequence GPNMSGKS.

Belongs to the DNA mismatch repair MutS family.

Functionally, this protein is involved in the repair of mismatches in DNA. It is possible that it carries out the mismatch recognition step. This protein has a weak ATPase activity. The chain is DNA mismatch repair protein MutS from Enterococcus faecalis (strain ATCC 700802 / V583).